The following is a 77-amino-acid chain: Coiled-coil-helix-coiled-coil-helix domain-containing protein C550.01c (77 aa).

The CHCH domain occupies K24–L65. 2 consecutive short sequence motifs (cx9C motif) follow at residues C27–C37 and C47–C57. 2 cysteine pairs are disulfide-bonded: C27/C57 and C37/C47.

The protein resides in the cytoplasm. It localises to the nucleus. In Schizosaccharomyces pombe (strain 972 / ATCC 24843) (Fission yeast), this protein is Coiled-coil-helix-coiled-coil-helix domain-containing protein C550.01c.